We begin with the raw amino-acid sequence, 254 residues long: Undecaprenyl-diphosphatase 3 (254 aa).

Transmembrane regions (helical) follow at residues 8–28, 33–53, 74–94, 97–117, 133–153, 174–194, 207–227, and 233–253; these read TEFL…LIGF, AKVF…VIFW, LHII…HSAI, VLFG…LMIV, ITYK…WPGF, AEYT…LDLI, LFAT…VSFL, and VKLT…YFFI.

It belongs to the UppP family.

Its subcellular location is the cell membrane. It catalyses the reaction di-trans,octa-cis-undecaprenyl diphosphate + H2O = di-trans,octa-cis-undecaprenyl phosphate + phosphate + H(+). Catalyzes the dephosphorylation of undecaprenyl diphosphate (UPP). Confers resistance to bacitracin. The chain is Undecaprenyl-diphosphatase 3 from Bacillus thuringiensis (strain Al Hakam).